The following is a 200-amino-acid chain: NADH-quinone oxidoreductase subunit C (200 aa).

Belongs to the complex I 30 kDa subunit family. NDH-1 is composed of 14 different subunits. Subunits NuoB, C, D, E, F, and G constitute the peripheral sector of the complex.

Its subcellular location is the cell inner membrane. The catalysed reaction is a quinone + NADH + 5 H(+)(in) = a quinol + NAD(+) + 4 H(+)(out). In terms of biological role, NDH-1 shuttles electrons from NADH, via FMN and iron-sulfur (Fe-S) centers, to quinones in the respiratory chain. The immediate electron acceptor for the enzyme in this species is believed to be ubiquinone. Couples the redox reaction to proton translocation (for every two electrons transferred, four hydrogen ions are translocated across the cytoplasmic membrane), and thus conserves the redox energy in a proton gradient. The protein is NADH-quinone oxidoreductase subunit C of Thiobacillus denitrificans (strain ATCC 25259 / T1).